The following is a 229-amino-acid chain: MSTSEAGAAATVIPIDDVARDHGKAPAVATAPPPPAAAAAVPAAATTTAPRKTGVPFFRRADRGSRCVALLDFVLRVAAFGPALAAAIATGTSDETLSVFTQFFQFHARFDDFPALLFFMVANAIAAGYLVLSLPFSAVIVLRPQAIGLRHLLLVCDMIIAALLTAAAAAAAAIVDLAHSGNLRANWVPICMQFHGFCQRTSGAVVGSFLAVLVLLFLVILAAFAIRKR.

The Cytoplasmic portion of the chain corresponds to 1-67 (MSTSEAGAAA…FRRADRGSRC (67 aa)). The helical transmembrane segment at 68-88 (VALLDFVLRVAAFGPALAAAI) threads the bilayer. Residues 89 to 115 (ATGTSDETLSVFTQFFQFHARFDDFPA) lie on the Extracellular side of the membrane. The helical transmembrane segment at 116 to 136 (LLFFMVANAIAAGYLVLSLPF) threads the bilayer. Over 137–157 (SAVIVLRPQAIGLRHLLLVCD) the chain is Cytoplasmic. Residues 158-178 (MIIAALLTAAAAAAAAIVDLA) form a helical membrane-spanning segment. Topologically, residues 179-205 (HSGNLRANWVPICMQFHGFCQRTSGAV) are extracellular. The chain crosses the membrane as a helical span at residues 206–226 (VGSFLAVLVLLFLVILAAFAI). Residues 227–229 (RKR) are Cytoplasmic-facing.

The protein belongs to the Casparian strip membrane proteins (CASP) family. Homodimer and heterodimers.

The protein resides in the cell membrane. Its function is as follows. Regulates membrane-cell wall junctions and localized cell wall deposition. Required for establishment of the Casparian strip membrane domain (CSD) and the subsequent formation of Casparian strips, a cell wall modification of the root endodermis that determines an apoplastic barrier between the intraorganismal apoplasm and the extraorganismal apoplasm and prevents lateral diffusion. This Sorghum bicolor (Sorghum) protein is Casparian strip membrane protein 1.